Reading from the N-terminus, the 356-residue chain is Arginine kinase (356 aa).

The Phosphagen kinase N-terminal domain occupies Lys9–Ile91. Position 64–68 (Gly64–Tyr68) interacts with L-arginine. The region spanning Phe119–Ala356 is the Phosphagen kinase C-terminal domain. ATP contacts are provided by residues Ser122 to Arg126 and His185. Glu225 provides a ligand contact to L-arginine. Residue Arg229 coordinates ATP. L-arginine is bound at residue Cys271. Residues Arg280–His284 and Arg309–Glu314 each bind ATP. Position 314 (Glu314) interacts with L-arginine.

It belongs to the ATP:guanido phosphotransferase family.

It carries out the reaction L-arginine + ATP = N(omega)-phospho-L-arginine + ADP + H(+). The chain is Arginine kinase (ARGK) from Artemia franciscana (Brine shrimp).